A 338-amino-acid chain; its full sequence is Ketol-acid reductoisomerase (NADP(+)) (338 aa).

The 181-residue stretch at 1–181 (MKVFYDNDAD…GGTRAGVIET (181 aa)) folds into the KARI N-terminal Rossmann domain. NADP(+) is bound by residues 24–27 (YGSQ), Arg47, Ser50, Ser52, and 82–85 (DEGQ). His107 is an active-site residue. NADP(+) is bound at residue Gly133. The KARI C-terminal knotted domain maps to 182-327 (SFREETETDL…SKLRSMMTWI (146 aa)). Residues Asp190, Glu194, Glu226, and Glu230 each contribute to the Mg(2+) site. Ser251 is a substrate binding site.

This sequence belongs to the ketol-acid reductoisomerase family. Mg(2+) serves as cofactor.

The enzyme catalyses (2R)-2,3-dihydroxy-3-methylbutanoate + NADP(+) = (2S)-2-acetolactate + NADPH + H(+). It catalyses the reaction (2R,3R)-2,3-dihydroxy-3-methylpentanoate + NADP(+) = (S)-2-ethyl-2-hydroxy-3-oxobutanoate + NADPH + H(+). The protein operates within amino-acid biosynthesis; L-isoleucine biosynthesis; L-isoleucine from 2-oxobutanoate: step 2/4. It participates in amino-acid biosynthesis; L-valine biosynthesis; L-valine from pyruvate: step 2/4. In terms of biological role, involved in the biosynthesis of branched-chain amino acids (BCAA). Catalyzes an alkyl-migration followed by a ketol-acid reduction of (S)-2-acetolactate (S2AL) to yield (R)-2,3-dihydroxy-isovalerate. In the isomerase reaction, S2AL is rearranged via a Mg-dependent methyl migration to produce 3-hydroxy-3-methyl-2-ketobutyrate (HMKB). In the reductase reaction, this 2-ketoacid undergoes a metal-dependent reduction by NADPH to yield (R)-2,3-dihydroxy-isovalerate. The protein is Ketol-acid reductoisomerase (NADP(+)) of Acidithiobacillus ferrooxidans (strain ATCC 23270 / DSM 14882 / CIP 104768 / NCIMB 8455) (Ferrobacillus ferrooxidans (strain ATCC 23270)).